The chain runs to 413 residues: Tyrosine--tRNA ligase (413 aa).

Tyr34 is a binding site for L-tyrosine. The 'HIGH' region signature appears at 39–48; that stretch reads CTAQSLHVGN. L-tyrosine is bound by residues Tyr171 and Gln175. The 'KMSKS' region signature appears at 231–235; the sequence is KMGKT. Lys234 is an ATP binding site. Residues 346 to 411 enclose the S4 RNA-binding domain; it reads IPITELLVTI…GKKCHILVKI (66 aa).

It belongs to the class-I aminoacyl-tRNA synthetase family. TyrS type 1 subfamily. As to quaternary structure, homodimer.

The protein localises to the cytoplasm. The catalysed reaction is tRNA(Tyr) + L-tyrosine + ATP = L-tyrosyl-tRNA(Tyr) + AMP + diphosphate + H(+). In terms of biological role, catalyzes the attachment of tyrosine to tRNA(Tyr) in a two-step reaction: tyrosine is first activated by ATP to form Tyr-AMP and then transferred to the acceptor end of tRNA(Tyr). In Orientia tsutsugamushi (strain Ikeda) (Rickettsia tsutsugamushi), this protein is Tyrosine--tRNA ligase.